The following is a 154-amino-acid chain: 3-hydroxyacyl-[acyl-carrier-protein] dehydratase FabZ (154 aa).

Residue H55 is part of the active site.

This sequence belongs to the thioester dehydratase family. FabZ subfamily.

The protein resides in the cytoplasm. The catalysed reaction is a (3R)-hydroxyacyl-[ACP] = a (2E)-enoyl-[ACP] + H2O. Involved in unsaturated fatty acids biosynthesis. Catalyzes the dehydration of short chain beta-hydroxyacyl-ACPs and long chain saturated and unsaturated beta-hydroxyacyl-ACPs. This chain is 3-hydroxyacyl-[acyl-carrier-protein] dehydratase FabZ, found in Nitratidesulfovibrio vulgaris (strain ATCC 29579 / DSM 644 / CCUG 34227 / NCIMB 8303 / VKM B-1760 / Hildenborough) (Desulfovibrio vulgaris).